The sequence spans 424 residues: Tyrosine--tRNA ligase (424 aa).

Tyr-37 provides a ligand contact to L-tyrosine. A 'HIGH' region motif is present at residues 42–51 (PTADSLHLGH). L-tyrosine contacts are provided by Tyr-174 and Gln-178. Residues 234-238 (KFGKT) carry the 'KMSKS' region motif. Lys-237 is an ATP binding site. In terms of domain architecture, S4 RNA-binding spans 357–414 (TGLIDALVASGLAKSKSEARTFIQSGSVAINGNKAEALDHAIGGDELLYGRFTILRRG).

The protein belongs to the class-I aminoacyl-tRNA synthetase family. TyrS type 1 subfamily. Homodimer.

The protein localises to the cytoplasm. It carries out the reaction tRNA(Tyr) + L-tyrosine + ATP = L-tyrosyl-tRNA(Tyr) + AMP + diphosphate + H(+). Catalyzes the attachment of tyrosine to tRNA(Tyr) in a two-step reaction: tyrosine is first activated by ATP to form Tyr-AMP and then transferred to the acceptor end of tRNA(Tyr). The sequence is that of Tyrosine--tRNA ligase from Dechloromonas aromatica (strain RCB).